The sequence spans 511 residues: Glucose-6-phosphate 1-dehydrogenase, cytoplasmic isoform (511 aa).

Residues 36 to 43 (GASGDLAK), Arg71, Tyr151, and Lys178 each bind NADP(+). D-glucose 6-phosphate-binding positions include Lys178, 208–212 (HYLGK), Glu246, and Asp265. His270 functions as the Proton acceptor in the catalytic mechanism. Lys353 contributes to the NADP(+) binding site. The D-glucose 6-phosphate site is built by Lys356 and Arg361. Residues Lys362, Arg366, and Arg390 each coordinate NADP(+). Gln392 contacts D-glucose 6-phosphate. NADP(+)-binding positions include 398-400 (YMK), 418-420 (DLS), Arg484, and Trp506.

The protein belongs to the glucose-6-phosphate dehydrogenase family. In terms of assembly, homotetramer. Found in tubers, stolons, roots, and flower buds.

It is found in the cytoplasm. It carries out the reaction D-glucose 6-phosphate + NADP(+) = 6-phospho-D-glucono-1,5-lactone + NADPH + H(+). Its pathway is carbohydrate degradation; pentose phosphate pathway; D-ribulose 5-phosphate from D-glucose 6-phosphate (oxidative stage): step 1/3. Its activity is regulated as follows. Regulated by metabolites. Catalyzes the rate-limiting step of the oxidative pentose-phosphate pathway, which represents a route for the dissimilation of carbohydrates besides glycolysis. The main function of this enzyme is to generate NADPH for reductive biosyntheses. In Solanum tuberosum (Potato), this protein is Glucose-6-phosphate 1-dehydrogenase, cytoplasmic isoform (G6PDH).